A 529-amino-acid chain; its full sequence is Peptide chain release factor 3 (529 aa).

The tr-type G domain occupies 11–280 (SKRRTFAIIS…GLTDWAPAPL (270 aa)). GTP is bound by residues 20 to 27 (SHPDAGKT), 88 to 92 (DTPGH), and 142 to 145 (NKLD).

It belongs to the TRAFAC class translation factor GTPase superfamily. Classic translation factor GTPase family. PrfC subfamily.

The protein localises to the cytoplasm. Functionally, increases the formation of ribosomal termination complexes and stimulates activities of RF-1 and RF-2. It binds guanine nucleotides and has strong preference for UGA stop codons. It may interact directly with the ribosome. The stimulation of RF-1 and RF-2 is significantly reduced by GTP and GDP, but not by GMP. The polypeptide is Peptide chain release factor 3 (Vibrio vulnificus (strain YJ016)).